The chain runs to 494 residues: Integrin beta-like protein 1 (494 aa).

The first 23 residues, 1–23 (MHPPGFKNFLLLVSSLFFIGLSA), serve as a signal peptide directing secretion. Intrachain disulfides connect Cys40–Cys71, Cys51–Cys69, Cys63–Cys74, Cys76–Cys89, Cys91–Cys112, Cys96–Cys110, Cys104–Cys115, Cys117–Cys126, Cys132–Cys159, Cys143–Cys157, Cys151–Cys162, Cys164–Cys178, Cys180–Cys202, Cys185–Cys200, Cys194–Cys205, Cys207–Cys216, Cys220–Cys247, Cys231–Cys245, Cys239–Cys250, Cys252–Cys269, Cys271–Cys296, Cys276–Cys294, Cys288–Cys299, Cys301–Cys310, Cys316–Cys343, Cys327–Cys341, Cys335–Cys346, Cys348–Cys361, Cys363–Cys384, Cys368–Cys382, Cys376–Cys387, Cys389–Cys398, Cys404–Cys431, Cys415–Cys429, Cys423–Cys434, Cys436–Cys448, Cys450–Cys471, Cys455–Cys469, Cys463–Cys474, and Cys476–Cys485. I-EGF domains lie at 40-90 (CRLS…PLCE), 91-127 (CHDW…EACQ), 132-179 (CDLT…KFCE), 180-217 (CDDR…DKCE), 220-270 (CDIT…DTCE), 271-311 (CDER…KKCE), 316-362 (CPLS…KTCE), 363-399 (CDDR…KLCQ), 404-449 (CNMT…EFCD), and 450-486 (CDDR…NACE). The stretch at 51 to 95 (CRAPGQPPGSALCHDRGRCECGVCICHVTEPGTYFGPLCECHDWV) is one I repeat. Positions 51-494 (CRAPGQPPGS…CEIWLGTEYP (444 aa)) are cysteine-rich tandem repeats. Residues 96–142 (CETYDGKTCAGHGTCDCGKCKCDVGWSGEACQYPTKCDLTKKISNQM) form an II repeat. The stretch at 143 to 184 (CKNSQDVICSNAGTCHCGRCKCDNSDGHGLIYGKFCECDDRE) is one III repeat. The stretch at 185 to 230 (CIDDETEEICGGHGKCYCGNCYCEAGWHGDKCEFQCDITPWESKRR) is one IV repeat. A V repeat occupies 231 to 275 (CTSPDGKVCSNRGTCVCGECSCHDVDPTGDWGDIHGDTCECDERD). Residues 276–326 (CRAVYDRYSDDFCSGHGQCNCGRCDCRAGWYGKKCEHPKNCPLSAEESTRK) form a VI repeat. The VII repeat unit spans residues 327 to 367 (CQGSSDLPCSGRGRCECGRCTCYPPGDSRVYGKTCECDDRR). One copy of the VIII repeat lies at 368-414 (CEDLDGVVCGGRGTCSCGRCVCEKGWFGKLCQHPRKCNMTEEQSRSL). Asn405 carries N-linked (GlcNAc...) asparagine glycosylation. One copy of the IX repeat lies at 415-454 (CESADGTLCSGKGSCHCGKCICSGEEWYISGEFCDCDDRD). A X repeat occupies 455-494 (CDKHDGLICTGNGICSCGNCECWDGWNGNACEIWLGTEYP).

It is found in the secreted. This chain is Integrin beta-like protein 1 (Itgbl1), found in Rattus norvegicus (Rat).